A 269-amino-acid chain; its full sequence is Cytochrome c oxidase subunit 3 (269 aa).

7 helical membrane passes run 21-41 (PWPMFTSFSLMNLALSLGLTA), 49-69 (MFMLLSTMTVLYSMTLWFKDI), 90-110 (GFLMFVVSEMLMFSSLFWAFL), 132-152 (ISAAELPLLNTMILLASGVTM), 167-187 (TLYGFAYSTLLMVLFVMFQGL), 205-225 (FFALTGLHGLHMMMLIMMLAM), and 247-267 (ILYLHVLDVMWLFMYMIVYWW).

This sequence belongs to the cytochrome c oxidase subunit 3 family. In terms of assembly, component of the cytochrome c oxidase (complex IV, CIV), a multisubunit enzyme composed of a catalytic core of 3 subunits and several supernumerary subunits. The complex exists as a monomer or a dimer and forms supercomplexes (SCs) in the inner mitochondrial membrane with ubiquinol-cytochrome c oxidoreductase (cytochrome b-c1 complex, complex III, CIII).

It is found in the mitochondrion inner membrane. The enzyme catalyses 4 Fe(II)-[cytochrome c] + O2 + 8 H(+)(in) = 4 Fe(III)-[cytochrome c] + 2 H2O + 4 H(+)(out). Its function is as follows. Component of the cytochrome c oxidase, the last enzyme in the mitochondrial electron transport chain which drives oxidative phosphorylation. The respiratory chain contains 3 multisubunit complexes succinate dehydrogenase (complex II, CII), ubiquinol-cytochrome c oxidoreductase (cytochrome b-c1 complex, complex III, CIII) and cytochrome c oxidase (complex IV, CIV), that cooperate to transfer electrons derived from NADH and succinate to molecular oxygen, creating an electrochemical gradient over the inner membrane that drives transmembrane transport and the ATP synthase. Cytochrome c oxidase is the component of the respiratory chain that catalyzes the reduction of oxygen to water. Electrons originating from reduced cytochrome c in the intermembrane space (IMS) are transferred via the dinuclear copper A center (CU(A)) of subunit 2 and heme A of subunit 1 to the active site in subunit 1, a binuclear center (BNC) formed by heme A3 and copper B (CU(B)). The BNC reduces molecular oxygen to 2 water molecules using 4 electrons from cytochrome c in the IMS and 4 protons from the mitochondrial matrix. The chain is Cytochrome c oxidase subunit 3 (COX3) from Debaryomyces hansenii (strain ATCC 36239 / CBS 767 / BCRC 21394 / JCM 1990 / NBRC 0083 / IGC 2968) (Yeast).